The chain runs to 302 residues: Formylmethanofuran--tetrahydromethanopterin formyltransferase (302 aa).

Belongs to the FTR family. As to quaternary structure, homotetramer.

It localises to the cytoplasm. It catalyses the reaction N-formylmethanofuran + 5,6,7,8-tetrahydromethanopterin + H(+) = N(5)-formyl-5,6,7,8-tetrahydromethanopterin + methanofuran. It participates in one-carbon metabolism; formaldehyde degradation; formate from formaldehyde (H(4)MPT route): step 4/5. Its function is as follows. Catalyzes the transfer of a formyl group from 5-formyl tetrahydromethanopterin (5-formyl-H(4)MPT) to methanofuran (MFR) to produce formylmethanofuran (formyl-MFR) and tetrahydromethanopterin (H(4)MPT). In Methylobacillus flagellatus (strain ATCC 51484 / DSM 6875 / VKM B-1610 / KT), this protein is Formylmethanofuran--tetrahydromethanopterin formyltransferase.